Here is a 476-residue protein sequence, read N- to C-terminus: Siroheme synthase (476 aa).

Positions 1 to 203 (MNYFPVFADL…RQIEAAKKEL (203 aa)) are precorrin-2 dehydrogenase /sirohydrochlorin ferrochelatase. Residues 22 to 23 (TI) and 43 to 44 (QK) contribute to the NAD(+) site. Serine 128 bears the Phosphoserine mark. Residues 214–476 (GSVSLVGAGP…LDSLRIERVA (263 aa)) are uroporphyrinogen-III C-methyltransferase. Proline 223 is a binding site for S-adenosyl-L-methionine. The Proton acceptor role is filled by aspartate 246. The Proton donor role is filled by lysine 268. S-adenosyl-L-methionine-binding positions include 299–301 (GGD), valine 304, 329–330 (TA), methionine 381, and glycine 410.

It in the N-terminal section; belongs to the precorrin-2 dehydrogenase / sirohydrochlorin ferrochelatase family. This sequence in the C-terminal section; belongs to the precorrin methyltransferase family.

The enzyme catalyses uroporphyrinogen III + 2 S-adenosyl-L-methionine = precorrin-2 + 2 S-adenosyl-L-homocysteine + H(+). It carries out the reaction precorrin-2 + NAD(+) = sirohydrochlorin + NADH + 2 H(+). It catalyses the reaction siroheme + 2 H(+) = sirohydrochlorin + Fe(2+). Its pathway is cofactor biosynthesis; adenosylcobalamin biosynthesis; precorrin-2 from uroporphyrinogen III: step 1/1. It participates in cofactor biosynthesis; adenosylcobalamin biosynthesis; sirohydrochlorin from precorrin-2: step 1/1. The protein operates within porphyrin-containing compound metabolism; siroheme biosynthesis; precorrin-2 from uroporphyrinogen III: step 1/1. It functions in the pathway porphyrin-containing compound metabolism; siroheme biosynthesis; siroheme from sirohydrochlorin: step 1/1. Its pathway is porphyrin-containing compound metabolism; siroheme biosynthesis; sirohydrochlorin from precorrin-2: step 1/1. Multifunctional enzyme that catalyzes the SAM-dependent methylations of uroporphyrinogen III at position C-2 and C-7 to form precorrin-2 via precorrin-1. Then it catalyzes the NAD-dependent ring dehydrogenation of precorrin-2 to yield sirohydrochlorin. Finally, it catalyzes the ferrochelation of sirohydrochlorin to yield siroheme. The chain is Siroheme synthase from Mannheimia succiniciproducens (strain KCTC 0769BP / MBEL55E).